A 62-amino-acid polypeptide reads, in one-letter code: Potassium channel toxin alpha-KTx 6.21 (62 aa).

The first 24 residues, 1–24 (MNAKLIYLLLVVTTMMLTFDTTQA), serve as a signal peptide directing secretion. 4 disulfide bridges follow: cysteine 29–cysteine 50, cysteine 35–cysteine 55, cysteine 39–cysteine 57, and cysteine 45–cysteine 60. Valine 61 carries the valine amide modification.

Belongs to the short scorpion toxin superfamily. Potassium channel inhibitor family. Alpha-KTx 06 subfamily. Post-translationally, C-terminal amidation is important for activity. There is a 50-70-fold decrease in ability to inhibit Kv1.2/KCNA2 when the toxin is not amidated. This decrease may be explained by a 23-fold slower association rate (k(on)) together with a 2-fold faster dissociation rate (k(off)). Expressed by the venom gland.

Its subcellular location is the secreted. In terms of biological role, reversible blocker of voltage-gated potassium channels with fast binding and unbinding kinetics. Has highest activity on human voltage-gated potassium channel Kv1.2/KCNA2 channels (IC(50)=0.11-0.16 nM), whereas its affinity for other channels tested was in the nanomolar range (hKv1.1/KCNA1, IC(50)=253 nM; hKv1.3/KCNA3, IC(50)=91 nM; and hKCa3.1/KCNN4, IC(50)=70 nM). This Urodacus yaschenkoi (Inland robust scorpion) protein is Potassium channel toxin alpha-KTx 6.21.